A 374-amino-acid chain; its full sequence is DNA replication and repair protein RecF (374 aa).

34–41 (GDNGAGKT) contacts ATP.

Belongs to the RecF family.

It is found in the cytoplasm. Functionally, the RecF protein is involved in DNA metabolism; it is required for DNA replication and normal SOS inducibility. RecF binds preferentially to single-stranded, linear DNA. It also seems to bind ATP. The sequence is that of DNA replication and repair protein RecF from Rhizobium johnstonii (strain DSM 114642 / LMG 32736 / 3841) (Rhizobium leguminosarum bv. viciae).